Here is a 440-residue protein sequence, read N- to C-terminus: Chromosome partition protein MukF (440 aa).

Residues 208-236 form a leucine-zipper region; it reads LSETSGTLRELQDTLEAAGDKLQANLLRI.

The protein belongs to the MukF family. Interacts, and probably forms a ternary complex, with MukE and MukB via its C-terminal region. The complex formation is stimulated by calcium or magnesium. It is required for an interaction between MukE and MukB.

The protein localises to the cytoplasm. It is found in the nucleoid. In terms of biological role, involved in chromosome condensation, segregation and cell cycle progression. May participate in facilitating chromosome segregation by condensation DNA from both sides of a centrally located replisome during cell division. Not required for mini-F plasmid partitioning. Probably acts via its interaction with MukB and MukE. Overexpression results in anucleate cells. It has a calcium binding activity. This Shigella boydii serotype 4 (strain Sb227) protein is Chromosome partition protein MukF.